A 260-amino-acid polypeptide reads, in one-letter code: Snake venom serine protease homolog 1 (260 aa).

The N-terminal stretch at 1–18 is a signal peptide; it reads MVLIRVLANLLLLQLSYA. A propeptide spanning residues 19–24 is cleaved from the precursor; the sequence is QESSEL. The region spanning 25–251 is the Peptidase S1 domain; sequence VIGGDECDIN…YTDWIEGIIA (227 aa). Cystine bridges form between Cys-31–Cys-165, Cys-52–Cys-68, Cys-100–Cys-258, Cys-144–Cys-212, Cys-176–Cys-191, and Cys-202–Cys-227. An N-linked (GlcNAc...) asparagine glycan is attached at Asn-253.

Belongs to the peptidase S1 family. Snake venom subfamily. Expressed by the venom gland.

Its subcellular location is the secreted. In terms of biological role, snake venom serine protease homolog that may act in the hemostasis system of the prey. The chain is Snake venom serine protease homolog 1 from Bitis gabonica (Gaboon adder).